Consider the following 394-residue polypeptide: Alcohol dehydrogenase-like 3 (394 aa).

8 residues coordinate Zn(2+): Cys-48, Thr-50, His-71, Cys-101, Cys-104, Cys-107, Cys-115, and Cys-188. Thr-50 and His-71 together coordinate an alcohol. Position 50 (Thr-50) interacts with NAD(+). Residues 213-218 (GLGSVG), Asp-237, Lys-242, Thr-283, Val-306, 306-308 (VGI), Phe-333, and Arg-383 each bind NAD(+).

This sequence belongs to the zinc-containing alcohol dehydrogenase family. Class-III subfamily. In terms of assembly, homodimer. It depends on Zn(2+) as a cofactor.

The protein localises to the cytoplasm. The catalysed reaction is a primary alcohol + NAD(+) = an aldehyde + NADH + H(+). It catalyses the reaction a secondary alcohol + NAD(+) = a ketone + NADH + H(+). The protein is Alcohol dehydrogenase-like 3 of Arabidopsis thaliana (Mouse-ear cress).